The sequence spans 291 residues: Ribosomal RNA small subunit methyltransferase H (291 aa).

S-adenosyl-L-methionine is bound by residues 36-38 (GGH), aspartate 55, alanine 90, aspartate 102, and glutamine 109.

Belongs to the methyltransferase superfamily. RsmH family.

It localises to the cytoplasm. It carries out the reaction cytidine(1402) in 16S rRNA + S-adenosyl-L-methionine = N(4)-methylcytidine(1402) in 16S rRNA + S-adenosyl-L-homocysteine + H(+). In terms of biological role, specifically methylates the N4 position of cytidine in position 1402 (C1402) of 16S rRNA. In Thermosipho africanus (strain TCF52B), this protein is Ribosomal RNA small subunit methyltransferase H.